Here is a 545-residue protein sequence, read N- to C-terminus: CTP synthase (545 aa).

The interval 1–266 (MTHFIFVTGG…DDLICERFGF (266 aa)) is amidoligase domain. CTP is bound at residue Ser13. Position 13 (Ser13) interacts with UTP. Residues 14–19 (SLGKGI) and Asp71 each bind ATP. The Mg(2+) site is built by Asp71 and Glu140. CTP contacts are provided by residues 147–149 (DIE), 187–192 (KTKPTQ), and Lys223. UTP contacts are provided by residues 187 to 192 (KTKPTQ) and Lys223. 239–241 (KDA) lines the ATP pocket. The Glutamine amidotransferase type-1 domain occupies 292 to 543 (RVAMVGKYVE…IDAAKTQHQK (252 aa)). Gly353 serves as a coordination point for L-glutamine. Catalysis depends on Cys380, which acts as the Nucleophile; for glutamine hydrolysis. L-glutamine is bound by residues 381 to 384 (LGMQ), Glu404, and Arg471. Residues His516 and Glu518 contribute to the active site.

Belongs to the CTP synthase family. In terms of assembly, homotetramer.

It carries out the reaction UTP + L-glutamine + ATP + H2O = CTP + L-glutamate + ADP + phosphate + 2 H(+). The enzyme catalyses L-glutamine + H2O = L-glutamate + NH4(+). It catalyses the reaction UTP + NH4(+) + ATP = CTP + ADP + phosphate + 2 H(+). It functions in the pathway pyrimidine metabolism; CTP biosynthesis via de novo pathway; CTP from UDP: step 2/2. Its activity is regulated as follows. Allosterically activated by GTP, when glutamine is the substrate; GTP has no effect on the reaction when ammonia is the substrate. The allosteric effector GTP functions by stabilizing the protein conformation that binds the tetrahedral intermediate(s) formed during glutamine hydrolysis. Inhibited by the product CTP, via allosteric rather than competitive inhibition. Its function is as follows. Catalyzes the ATP-dependent amination of UTP to CTP with either L-glutamine or ammonia as the source of nitrogen. Regulates intracellular CTP levels through interactions with the four ribonucleotide triphosphates. This chain is CTP synthase, found in Acinetobacter baumannii (strain AB307-0294).